Reading from the N-terminus, the 235-residue chain is Large ribosomal subunit protein uL3 (235 aa).

Gln-151 carries the post-translational modification N5-methylglutamine.

It belongs to the universal ribosomal protein uL3 family. As to quaternary structure, part of the 50S ribosomal subunit. Forms a cluster with proteins L14 and L19. Methylated by PrmB.

In terms of biological role, one of the primary rRNA binding proteins, it binds directly near the 3'-end of the 23S rRNA, where it nucleates assembly of the 50S subunit. This is Large ribosomal subunit protein uL3 from Rhodospirillum rubrum (strain ATCC 11170 / ATH 1.1.1 / DSM 467 / LMG 4362 / NCIMB 8255 / S1).